The primary structure comprises 132 residues: Small ribosomal subunit protein uS11 (132 aa).

The protein belongs to the universal ribosomal protein uS11 family. In terms of assembly, part of the 30S ribosomal subunit. Interacts with proteins S7 and S18. Binds to IF-3.

Located on the platform of the 30S subunit, it bridges several disparate RNA helices of the 16S rRNA. Forms part of the Shine-Dalgarno cleft in the 70S ribosome. This chain is Small ribosomal subunit protein uS11, found in Clostridium kluyveri (strain NBRC 12016).